Here is a 149-residue protein sequence, read N- to C-terminus: MADQLTEEQIAEFKEAFSLFDKDGDGTITTKELGTVMRSLGQNPTEAELQDMINEVDADGNGTIDFPEFLSLMARKMKDTDTEEELIEAFKVFDRDGNGLISAAELRHVMTNLGEKLTDEEVDEMIREADIDGDGHINYEEFVRMMMAK.

Alanine 2 bears the N-acetylalanine mark. 4 consecutive EF-hand domains span residues 8 to 43, 44 to 79, 81 to 116, and 117 to 149; these read EQIAEFKEAFSLFDKDGDGTITTKELGTVMRSLGQN, PTEAELQDMINEVDADGNGTIDFPEFLSLMARKMKD, DTEEELIEAFKVFDRDGNGLISAAELRHVMTNLGEK, and LTDEEVDEMIREADIDGDGHINYEEFVRMMMAK. Ca(2+) is bound by residues aspartate 21, aspartate 23, aspartate 25, threonine 27, glutamate 32, aspartate 57, aspartate 59, asparagine 61, threonine 63, glutamate 68, aspartate 94, aspartate 96, asparagine 98, and glutamate 105. Lysine 116 is subject to N6,N6,N6-trimethyllysine. Aspartate 130, aspartate 132, aspartate 134, histidine 136, and glutamate 141 together coordinate Ca(2+).

Belongs to the calmodulin family.

Calmodulin mediates the control of a large number of enzymes, ion channels and other proteins by Ca(2+). Among the enzymes to be stimulated by the calmodulin-Ca(2+) complex are a number of protein kinases and phosphatases. The polypeptide is Calmodulin (Tetrahymena pyriformis).